Reading from the N-terminus, the 581-residue chain is Trehalase (581 aa).

Belongs to the glycosyl hydrolase 15 family. As to quaternary structure, monomer.

It carries out the reaction alpha,alpha-trehalose + H2O = alpha-D-glucose + beta-D-glucose. It functions in the pathway glycan degradation; trehalose degradation; D-glucose from alpha,alpha-trehalose: step 1/1. Inhibited by validamycin A. Its function is as follows. Catalyzes the hydrolysis of alpha,alpha-trehalose into two molecules of D-glucose. The polypeptide is Trehalase (Thermoplasma acidophilum (strain ATCC 25905 / DSM 1728 / JCM 9062 / NBRC 15155 / AMRC-C165)).